Reading from the N-terminus, the 102-residue chain is Large ribosomal subunit protein uL24 (102 aa).

The protein belongs to the universal ribosomal protein uL24 family. Part of the 50S ribosomal subunit.

One of two assembly initiator proteins, it binds directly to the 5'-end of the 23S rRNA, where it nucleates assembly of the 50S subunit. Its function is as follows. One of the proteins that surrounds the polypeptide exit tunnel on the outside of the subunit. This is Large ribosomal subunit protein uL24 from Limosilactobacillus reuteri (strain DSM 20016) (Lactobacillus reuteri).